We begin with the raw amino-acid sequence, 415 residues long: MAMRLSSAAVALALLLAATALEDVARGQDTERIEGSAGDVLEDDPVGRLKVYVYELPTKYNKKMVAKDSRCLSHMFAAEIFMHRFLLSSAIRTLNPEEADWFYTPVYTTCDLTPWGHPLPFKSPRIMRSAIQFISSHWPYWNRTDGADHFFVVPHDFGACFHYQEEKAIERGILPLLRRATLVQTFGQKDHVCLKEGSITIPPYAPPQKMKTHLVPPETPRSIFVYFRGLFYDTANDPEGGYYARGARASVWENFKNNPLFDISTDHPPTYYEDMQRSIFCLCPLGWAPWSPRLVEAVVFGCIPVIIADDIVLPFADAIPWDEIGVFVAEDDVPKLDTILTSIPMDVILRKQRLLANPSMKQAMLFPQPAQPGDAFHQILNGLGRKLPHPKSVYLDPGQKVLNWTQGPVGDLKPW.

The Cytoplasmic portion of the chain corresponds to 1 to 4 (MAMR). Residues 5-25 (LSSAAVALALLLAATALEDVA) form a helical; Signal-anchor for type II membrane protein membrane-spanning segment. At 26 to 415 (RGQDTERIEG…QGPVGDLKPW (390 aa)) the chain is on the lumenal side. Asparagine 142 and asparagine 403 each carry an N-linked (GlcNAc...) asparagine glycan.

Belongs to the glycosyltransferase 47 family.

The protein resides in the golgi apparatus membrane. Functionally, involved in the synthesis of glucuronoxylan hemicellulose in secondary cell walls. The chain is Probable glucuronosyltransferase Os01g0926600 from Oryza sativa subsp. japonica (Rice).